Consider the following 166-residue polypeptide: uncharacterized protein (166 aa).

Residue 117–124 participates in ATP binding; sequence AAKSGGKT.

This is an uncharacterized protein from Mycoplasma pneumoniae (strain ATCC 29342 / M129 / Subtype 1) (Mycoplasmoides pneumoniae).